Consider the following 356-residue polypeptide: Fructose import permease protein FruF (356 aa).

The next 7 membrane-spanning stretches (helical) occupy residues 25 to 45 (IVAFILLVIICTIFQHDFLAL), 77 to 97 (LVISTAGIDLSVGSVMAVAGA), 113 to 133 (ILIALAVGLAIGCVNGALVSF), 180 to 200 (FILGIPANFVIAVIIVILVGL), 231 to 251 (ILFLVYAISGFLAAIAGLFAT), 268 to 290 (MYAILAVVIGGTSLLGGKFSLAG), and 308 to 328 (LGVNAEATPAFFAVVVIVICV).

It belongs to the binding-protein-dependent transport system permease family. The complex is composed of an ATP-binding protein (FruK), two transmembrane proteins (FruF and FruG) and a solute-binding protein (FruE).

The protein resides in the cell membrane. Functionally, part of the high-affinity ABC transporter complex FruEKFG involved in fructose uptake. Can also transport ribose and xylose, with lower affinity. Probably responsible for the translocation of the substrate across the membrane. This chain is Fructose import permease protein FruF, found in Bifidobacterium longum (strain NCC 2705).